The following is a 915-amino-acid chain: Protein translocase subunit SecA (915 aa).

Residues glutamine 87, glycine 105–threonine 109, and aspartate 516 each bind ATP. The segment at methionine 866–serine 915 is disordered. Zn(2+) contacts are provided by cysteine 899, cysteine 901, cysteine 910, and histidine 911. Over residues lysine 905–serine 915 the composition is skewed to basic residues.

This sequence belongs to the SecA family. As to quaternary structure, monomer and homodimer. Part of the essential Sec protein translocation apparatus which comprises SecA, SecYEG and auxiliary proteins SecDF-YajC and YidC. It depends on Zn(2+) as a cofactor.

The protein resides in the cell inner membrane. It is found in the cytoplasm. It carries out the reaction ATP + H2O + cellular proteinSide 1 = ADP + phosphate + cellular proteinSide 2.. Functionally, part of the Sec protein translocase complex. Interacts with the SecYEG preprotein conducting channel. Has a central role in coupling the hydrolysis of ATP to the transfer of proteins into and across the cell membrane, serving both as a receptor for the preprotein-SecB complex and as an ATP-driven molecular motor driving the stepwise translocation of polypeptide chains across the membrane. This chain is Protein translocase subunit SecA, found in Delftia acidovorans (strain DSM 14801 / SPH-1).